A 160-amino-acid polypeptide reads, in one-letter code: Major strawberry allergen Fra a 1-B (160 aa).

This sequence belongs to the BetVI family. In terms of assembly, monomer.

The chain is Major strawberry allergen Fra a 1-B from Fragaria ananassa (Strawberry).